A 185-amino-acid polypeptide reads, in one-letter code: Elongation factor P (185 aa).

Belongs to the elongation factor P family.

Its subcellular location is the cytoplasm. It functions in the pathway protein biosynthesis; polypeptide chain elongation. Involved in peptide bond synthesis. Stimulates efficient translation and peptide-bond synthesis on native or reconstituted 70S ribosomes in vitro. Probably functions indirectly by altering the affinity of the ribosome for aminoacyl-tRNA, thus increasing their reactivity as acceptors for peptidyl transferase. This chain is Elongation factor P, found in Thermotoga petrophila (strain ATCC BAA-488 / DSM 13995 / JCM 10881 / RKU-1).